Here is a 143-residue protein sequence, read N- to C-terminus: Small ribosomal subunit protein uS12 (143 aa).

The segment covering 1–15 (MGKCRGLRTARKLRD) has biased composition (basic residues). The tract at residues 1–27 (MGKCRGLRTARKLRDHRREQKWHDKQY) is disordered. Residues 16 to 27 (HRREQKWHDKQY) are compositionally biased toward basic and acidic residues.

Belongs to the universal ribosomal protein uS12 family. Component of the 40S small ribosomal subunit.

It is found in the cytoplasm. The protein localises to the cytosol. The protein resides in the rough endoplasmic reticulum. This Ictalurus punctatus (Channel catfish) protein is Small ribosomal subunit protein uS12 (rps23).